Consider the following 288-residue polypeptide: Bifunctional protein FolD (288 aa).

Residues 166 to 168, S191, and V232 contribute to the NADP(+) site; that span reads GRS.

The protein belongs to the tetrahydrofolate dehydrogenase/cyclohydrolase family. As to quaternary structure, homodimer.

It catalyses the reaction (6R)-5,10-methylene-5,6,7,8-tetrahydrofolate + NADP(+) = (6R)-5,10-methenyltetrahydrofolate + NADPH. It carries out the reaction (6R)-5,10-methenyltetrahydrofolate + H2O = (6R)-10-formyltetrahydrofolate + H(+). Its pathway is one-carbon metabolism; tetrahydrofolate interconversion. Catalyzes the oxidation of 5,10-methylenetetrahydrofolate to 5,10-methenyltetrahydrofolate and then the hydrolysis of 5,10-methenyltetrahydrofolate to 10-formyltetrahydrofolate. This is Bifunctional protein FolD from Roseiflexus castenholzii (strain DSM 13941 / HLO8).